Reading from the N-terminus, the 509-residue chain is MDQHPSARSCSSRGAAPSCESVSGEPPMNLYIHSTTGTRFELSLPAEETVEGLKRRLSQRLKVPKERLALLHKETRLSSGKLQDLGITDGSKLTLVPTVEAGLMSQASRPEQSVMQALESLTETQVSDFLSGRSPLTLALRVGDHMMFVQLQLAAQPSGGPQLQHRHLISRGSSEGTTGLSHGASGSASGMARVSHNPHPHHPHQHPHHPNTTLPSNPAAFPPSPSIPSIPPMYSTSASGHCSPPPQPSQLPGSFLHSQQPSSACAPSPSSPSPAASCPEASCSAKTSGNCNTPLRSRKPGAIIESFVNHAPGVFSGTFSGTLHPNCQDSTGRPRRDIGTILQILNDLLSATRHYQGMPPSLTQLRYQTQCTSPNSPAPSPPPSPPHTTGLTGLPTTVPSETQPTLHPLVQCQSQIRMCKPPGDRLRQTENRATRCKVERLQLLMQQKRLRRKARRDSRAPYHWLPNRKAGRSNSNSSMSSEGSLDLDFEDSVWKPDVKADMKSEFIMA.

Over residues 1 to 12 the composition is skewed to polar residues; it reads MDQHPSARSCSS. The disordered stretch occupies residues 1–27; that stretch reads MDQHPSARSCSSRGAAPSCESVSGEPP. The region spanning 28 to 102 is the Ubiquitin-like domain; that stretch reads MNLYIHSTTG…LTLVPTVEAG (75 aa). 3 disordered regions span residues 172 to 295, 370 to 404, and 448 to 485; these read GSSE…NTPL, QCTS…ETQP, and KRLR…EGSL. Over residues 176 to 190 the composition is skewed to low complexity; sequence GTTGLSHGASGSASG. Basic residues predominate over residues 196–209; sequence HNPHPHHPHQHPHH. Residues 220–231 show a composition bias toward pro residues; the sequence is AFPPSPSIPSIP. Positions 261 to 285 are enriched in low complexity; sequence PSSACAPSPSSPSPAASCPEASCSA. Residues 286–295 are compositionally biased toward polar residues; it reads KTSGNCNTPL. Positions 376-386 are enriched in pro residues; it reads SPAPSPPPSPP. The segment covering 387–400 has biased composition (low complexity); that stretch reads HTTGLTGLPTTVPS.

Its subcellular location is the nucleus. It localises to the cytoplasm. The protein resides in the cytosol. The protein localises to the nucleolus. Its function is as follows. Facilitates ubiquitin-independent proteasomal degradation of polycomb protein CBX4. Plays a role in inhibiting the activity of glucokinase GCK and both glucose-induced and basal insulin secretion. The chain is Midnolin (midn) from Danio rerio (Zebrafish).